The following is a 321-amino-acid chain: Transcription factor ATOH8 (321 aa).

Disordered stretches follow at residues 59–193 (GLRD…SSYS) and 203–222 (HQDSSASPRKRPGEATAASS). Positions 70–85 (VPVPVPVPVPVAPAVP) are enriched in pro residues. Over residues 93–109 (AGERGGSRAPEVSDARK) the composition is skewed to basic and acidic residues. A compositionally biased stretch (pro residues) spans 121 to 132 (LPTPPPPPPPAP). The segment covering 133 to 143 (QSQAPGGPEAQ) has biased composition (low complexity). The span at 160-186 (PARPAPSAPPAPPAPPESTVRPAPPTR) shows a compositional bias: pro residues. Residues 230–243 (TRRLLANARERTRV) are basic motif; degenerate. The region spanning 230-282 (TRRLLANARERTRVHTISAAFEALRKQVPCYSYGQKLSKLAILRIACNYILSL) is the bHLH domain. The interval 244-282 (HTISAAFEALRKQVPCYSYGQKLSKLAILRIACNYILSL) is helix-loop-helix motif.

As to quaternary structure, efficient DNA binding requires dimerization with another bHLH protein. Interacts with NEUROG3 and NEUROD1. Interacts with ZFPM2; mediates indirect interaction with GATA4. Forms a heterodimer with TCF3; repress transcription of TCF3 and TCF3/NEUROG3 dimer-induced transactivation of E box-dependent promoters. As to expression, expressed in lung, liver, kidney, heart and pancreas. Expressed in endothel of umbilical vessels.

The protein resides in the nucleus. It is found in the nucleus speckle. It localises to the cytoplasm. Its function is as follows. Transcription factor that binds a palindromic (canonical) core consensus DNA sequence 5'-CANNTG- 3' known as an E-box element, possibly as a heterodimer with other bHLH proteins. Regulates endothelial cell proliferation, migration and tube-like structures formation. Modulates endothelial cell differentiation through NOS3. May be implicated in specification and differentiation of neuronal cell lineages in the brain. May participate in kidney development and may be involved in podocyte differentiation. During early embryonic development is involved in tissue-specific differentiation processes that are dependent on class II bHLH factors and namely modulates the differentiation program initiated by the pro-endocrine factor NEUROG3. During myogenesis, may play a role during the transition of myoblasts from the proliferative phase to the differentiation phase. Positively regulates HAMP transcription in two ways, firstly by acting directly on the HAMP promoter via E-boxes binding and indirectly through increased phosphorylation of SMAD protein complex. Repress NEUROG3-dependent gene activation in a gene-specific manner through at least two mechanisms; requires only either the sequestering of a general partner such as TCF3 through heterodimerization, either also requires binding of the bHLH domain to DNA via a basic motif. This is Transcription factor ATOH8 from Homo sapiens (Human).